We begin with the raw amino-acid sequence, 190 residues long: MAKANEIKRGMAISYNNKLLLVKDIDIQAPSARGASTLYKMRFTDIRTGQKVEERFKGDDILDTINLTRRAVSFSYIDGDEYVFMDNEDYTPYTFKKDQIEEELLFIPEEGLAGMQVLTMDGQVLALELPQTVDMEIIETVPGIKGASASARTKPATLPTGLVIQVPEYLSTGDKIRIHIAERRYMGRAD.

This sequence belongs to the elongation factor P family.

The sequence is that of Elongation factor P-like protein from Proteus mirabilis (strain HI4320).